The primary structure comprises 229 residues: uncharacterized protein (229 aa).

The first 17 residues, 1-17 (MKKIIALMLFLTFFAHA), serve as a signal peptide directing secretion.

This is an uncharacterized protein from Escherichia coli O157:H7.